The following is a 778-amino-acid chain: Receptor like protein 28 (778 aa).

The signal sequence occupies residues methionine 1 to serine 24. The Extracellular segment spans residues serine 25–lysine 739. 8 N-linked (GlcNAc...) asparagine glycosylation sites follow: asparagine 60, asparagine 72, asparagine 93, asparagine 106, asparagine 111, asparagine 147, asparagine 170, and asparagine 173. 5 LRR repeats span residues phenylalanine 99–asparagine 123, asparagine 125–asparagine 147, leucine 148–leucine 171, threonine 172–methionine 195, and phenylalanine 197–lysine 219. The stretch at leucine 220–lysine 240 is one LRR 6; degenerate repeat. LRR repeat units lie at residues leucine 241–serine 265, leucine 266–proline 291, threonine 293–threonine 313, leucine 314–leucine 338, arginine 340–asparagine 363, and serine 364–isoleucine 387. Asparagine 253 carries N-linked (GlcNAc...) asparagine glycosylation. Asparagine 348 and asparagine 363 each carry an N-linked (GlcNAc...) asparagine glycan. The LRR 13; degenerate repeat unit spans residues lysine 388–asparagine 407. Residues asparagine 396, asparagine 407, asparagine 420, asparagine 431, and asparagine 476 are each glycosylated (N-linked (GlcNAc...) asparagine). LRR repeat units lie at residues arginine 408 to leucine 429, serine 430 to glycine 453, serine 455 to cysteine 477, serine 479 to alanine 500, leucine 501 to proline 525, phenylalanine 528 to asparagine 552, leucine 601 to leucine 625, lysine 626 to alanine 649, threonine 650 to leucine 673, and tyrosine 678 to glutamate 700. Residues asparagine 632 and asparagine 648 are each glycosylated (N-linked (GlcNAc...) asparagine). N-linked (GlcNAc...) asparagine glycosylation occurs at asparagine 680. Residues alanine 740–alanine 760 form a helical membrane-spanning segment. Over serine 761–phenylalanine 778 the chain is Cytoplasmic.

This sequence belongs to the RLP family.

Its subcellular location is the cell membrane. The chain is Receptor like protein 28 from Arabidopsis thaliana (Mouse-ear cress).